A 96-amino-acid chain; its full sequence is GPLAVAINAAYMQTYIGGVSCPYICSRRLNHGVLLVGYGSAGYAPIRLKEKPYWVIKNSWGENWGENGYYKICRGRNICGVDSMVSTVAAVHTTSQ.

Cys-25 and Cys-79 are oxidised to a cystine. Residues His-31 and Asn-58 contribute to the active site.

This sequence belongs to the peptidase C1 family.

The protein is Cysteine proteinase of Carica papaya (Papaya).